Reading from the N-terminus, the 70-residue chain is DNA gyrase inhibitor YacG (70 aa).

Cysteine 20, cysteine 23, cysteine 35, and cysteine 39 together coordinate Zn(2+).

It belongs to the DNA gyrase inhibitor YacG family. In terms of assembly, interacts with GyrB. The cofactor is Zn(2+).

Its function is as follows. Inhibits all the catalytic activities of DNA gyrase by preventing its interaction with DNA. Acts by binding directly to the C-terminal domain of GyrB, which probably disrupts DNA binding by the gyrase. The polypeptide is DNA gyrase inhibitor YacG (Rhizobium leguminosarum bv. trifolii (strain WSM2304)).